We begin with the raw amino-acid sequence, 785 residues long: MKLGKVEFCHFLQLIALFLCFSGMSQAELSRSRSKPYFQSGRSRTKRSWVWNQFFVLEEYMGSDPLYVGKLHSDVDKGDGSIKYILSGEGASSIFIIDENTGDIHATKRLDREEQAYYTLRAQALDRLTNKPVEPESEFVIKIQDINDNEPKFLDGPYTAGVPEMSPVGTSVVQVTATDADDPTYGNSARVVYSILQGQPYFSVEPKTGVIKTALPNMDREAKDQYLLVIQAKDMVGQNGGLSGTTSVTVTLTDVNDNPPRFPRRSYQYNVPESLPVASVVARIKAADADIGANAEMEYKIVDGDGLGIFKISVDKETQEGIITIQKELDFEAKTSYTLRIEAANKDADPRFLSLGPFSDTTTVKIIVEDVDEPPVFSSPLYPMEVSEATQVGNIIGTVAAHDPDSSNSPVRYSIDRNTDLERYFNIDANSGVITTAKSLDRETNAIHNITVLAMESQNPSQVGRGYVAITILDINDNAPEFAMDYETTVCENAQPGQVIQKISAVDKDEPSNGHQFYFSLTTDATNNHNFSLKDNKDNTASILTRRNGFRRQEQSVYYLPIFIVDSGSPSLSSTNTLTIRVCDCDADGVAQTCNAEAYVLPAGLSTGALIAILACVLTLLVLILLIVTMRRRKKEPLIFDEERDIRENIVRYDDEGGGEEDTEAFDMAALRNLNVIRDTKTRRDVTPEIQFLSRPAFKSIPDNVIFREFIWERLKEADVDPGAPPYDSLQTYAFEGNGSVAESLSSLDSISSNSDQNYDYLSDWGPRFKRLADMYGTGQESLYS.

The signal sequence occupies residues 1 to 27 (MKLGKVEFCHFLQLIALFLCFSGMSQA). A propeptide spanning residues 28–47 (ELSRSRSKPYFQSGRSRTKR) is cleaved from the precursor. The Extracellular portion of the chain corresponds to 28–607 (ELSRSRSKPY…AYVLPAGLST (580 aa)). Cadherin domains follow at residues 49 to 153 (WVWN…EPKF), 154 to 262 (LDGP…PPRF), 263 to 377 (PRRS…PPVF), 378 to 482 (SSPL…APEF), and 482 to 599 (FAMD…AEAY). N-linked (GlcNAc...) asparagine glycosylation is found at Asn-449 and Asn-530. A helical membrane pass occupies residues 608–628 (GALIAILACVLTLLVLILLIV). Residues 629 to 785 (TMRRRKKEPL…YGTGQESLYS (157 aa)) lie on the Cytoplasmic side of the membrane.

It localises to the cell membrane. Cadherins are calcium-dependent cell adhesion proteins. They preferentially interact with themselves in a homophilic manner in connecting cells; cadherins may thus contribute to the sorting of heterogeneous cell types. The sequence is that of Cadherin-7 (CDH7) from Homo sapiens (Human).